Reading from the N-terminus, the 357-residue chain is Leucoanthocyanidin dioxygenase (357 aa).

Positions 212 to 311 (LLLQMKINYY…RISWAVFCEP (100 aa)) constitute a Fe2OG dioxygenase domain. Fe cation contacts are provided by histidine 236, aspartate 238, and histidine 292.

Belongs to the iron/ascorbate-dependent oxidoreductase family. Fe cation serves as cofactor. Requires L-ascorbate as cofactor.

The enzyme catalyses a (2R,3S,4S)-leucoanthocyanidin + 2-oxoglutarate + O2 = a 4-H-anthocyanidin with a 3-hydroxy group + succinate + CO2 + 2 H2O. It participates in pigment biosynthesis; anthocyanin biosynthesis. In terms of biological role, oxidation of leucoanthocyanidins into anthocyanidins. The chain is Leucoanthocyanidin dioxygenase (ANS) from Malus domestica (Apple).